The primary structure comprises 395 residues: Dihydroorotate dehydrogenase (quinone), mitochondrial (395 aa).

The transit peptide at 1–10 directs the protein to the mitochondrion; not cleaved; the sequence is MAWRQLKKRA. The Mitochondrial matrix portion of the chain corresponds to 1–10; that stretch reads MAWRQLKKRA. Residues 11–30 form a helical membrane-spanning segment; the sequence is QDAMVILGGGGLLFASYLTA. Residues 31 to 395 are Mitochondrial intermembrane-facing; that stretch reads TGDEHFYAEL…TDAIGADHRR (365 aa). FMN is bound by residues 95–99 and S119; that span reads AGFDK. K99 lines the substrate pocket. 144–148 contributes to the substrate binding site; that stretch reads NRYGF. Positions 180 and 211 each coordinate FMN. 211-216 serves as a coordination point for substrate; it reads NVSSPN. The active-site Nucleophile is S214. K254 and T282 together coordinate FMN. 283–284 is a binding site for substrate; the sequence is NS. FMN contacts are provided by residues G305, G334, and 355–356; that span reads YT.

The protein belongs to the dihydroorotate dehydrogenase family. Type 2 subfamily. Monomer. FMN serves as cofactor. In terms of processing, the uncleaved transit peptide is required for mitochondrial targeting and proper membrane integration.

Its subcellular location is the mitochondrion inner membrane. It carries out the reaction (S)-dihydroorotate + a quinone = orotate + a quinol. Its pathway is pyrimidine metabolism; UMP biosynthesis via de novo pathway; orotate from (S)-dihydroorotate (quinone route): step 1/1. Its function is as follows. Catalyzes the conversion of dihydroorotate to orotate with quinone as electron acceptor. Required for UMP biosynthesis via de novo pathway. This Bos taurus (Bovine) protein is Dihydroorotate dehydrogenase (quinone), mitochondrial (DHODH).